The sequence spans 228 residues: Large ribosomal subunit protein uL16 (228 aa).

It belongs to the universal ribosomal protein uL16 family. Component of the small ribosomal subunit. Mature ribosomes consist of a small (40S) and a large (60S) subunit. The 40S subunit contains about 33 different proteins and 1 molecule of RNA (18S). The 60S subunit contains about 49 different proteins and 3 molecules of RNA (25S, 5.8S and 5S).

In Pinus taeda (Loblolly pine), this protein is Large ribosomal subunit protein uL16 (RPL10).